The primary structure comprises 383 residues: Nuclear hormone receptor family member nhr-217 (383 aa).

Positions 53–127 (IPACPVCDVP…AGLQRDYVRQ (75 aa)) form a DNA-binding region, nuclear receptor. NR C4-type zinc fingers lie at residues 56 to 77 (CPVC…CAAC) and 93 to 109 (CKRE…CRAC). The region spanning 172–383 (ILKVSNSSLF…KLYVQIGIPF (212 aa)) is the NR LBD domain.

This sequence belongs to the nuclear hormone receptor family.

The protein resides in the nucleus. In terms of biological role, orphan nuclear receptor. This Caenorhabditis elegans protein is Nuclear hormone receptor family member nhr-217 (nhr-217).